The sequence spans 120 residues: Protein EPIDERMAL PATTERNING FACTOR 2 (120 aa).

The first 25 residues, 1 to 25, serve as a signal peptide directing secretion; that stretch reads MTKFVRKYMFCLVLVFAACSLVVNS. 4 cysteine pairs are disulfide-bonded: Cys76/Cys107, Cys80/Cys86, Cys83/Cys109, and Cys95/Cys101.

This sequence belongs to the plant cysteine rich small secretory peptide family. Epidermal patterning factor subfamily. In terms of assembly, interacts with ERECTA, ERL1 and TMM. As to expression, expressed in leaves, especially by the MMCs and their early descendants cells (stomatal lineage cells) including guard mother cells (GMCs).

It localises to the secreted. Functionally, controls stomatal patterning. Regulates the number of cells that enter, and remain in, the stomatal lineage by inhibiting protodermal cells from adopting the meristemoid mother cell (MMC) fate in a non-cell-autonomous manner. Mediates stomatal development inhibition. MEPF2: mobile signal controlling stomatal development in a non-cell-autonomous manner. Uses ERECTA as major receptor. Inactivated by cleavage by CRSP (AC Q9LNU1). May act by competing with somatogen (AC Q9SV72) for the same receptor, TMM (AC Q9SSD1). This Arabidopsis thaliana (Mouse-ear cress) protein is Protein EPIDERMAL PATTERNING FACTOR 2.